A 566-amino-acid polypeptide reads, in one-letter code: Type 3 secretion system secretin (566 aa).

Positions 1–22 are cleaved as a signal peptide; that stretch reads MKKFNIKSLTLLIVLLPLIVNA.

Belongs to the bacterial secretin family. T3SS SctC subfamily. The core secretion machinery of the T3SS is composed of approximately 20 different proteins, including cytoplasmic components, a base, an export apparatus and a needle. This subunit is part of the base, which anchors the injectisome in the bacterial cell envelope. Forms a stable homooligomeric complex.

Its subcellular location is the cell outer membrane. In terms of biological role, component of the type III secretion system (T3SS), also called injectisome, which is used to inject bacterial effector proteins into eukaryotic host cells. Forms a ring-shaped multimeric structure with an apparent central pore in the outer membrane. The chain is Type 3 secretion system secretin from Shigella sonnei.